The sequence spans 149 residues: Small ribosomal subunit protein uS11z (149 aa).

Residues 130–149 (VTPVPTDSTRRKGGRRGRRL) are disordered. Residues 140 to 149 (RKGGRRGRRL) are compositionally biased toward basic residues.

Belongs to the universal ribosomal protein uS11 family.

The protein is Small ribosomal subunit protein uS11z of Zea mays (Maize).